A 467-amino-acid polypeptide reads, in one-letter code: MRANSKAKPVSRAALAGEADPRLVALSVSIQDDGALYAEDIRGSQAHVSMLAAQGIVPKAAARRIVAALDQVRAEFAAGKIRFDPALEDVHTHVERRLGELVGKDAGYLHAGRSRNDQVALDERLFIVGACDRCDAALERLQRAFLGQARAHERTILPGYTHLQRAQPVSLAHHLLAYVEMFGRDRERFAEVRRRAAISPLGSGALAGTTLPLDREAVAARLGLAGVTHNSLDAVSDRDSAAELLFACALAAVHLSRIGEELVLWTTKEFGFATLSDAFATGSSLMPQKKNPDVGELARGRAGRALGDLVALLAILKGLPLSYNRDLQEDKRPLLGGPEALVLTADAVAGAVETATFHAARMEEALGSGEALATDAAEYLVDRGVPFREAHEAVGKAAAFSAREGRPMARLTAAEWATFHRRFEKDVLRCFDARRSLRRRELPGAPGPRAVRAELRRWEKALGKARG.

The protein belongs to the lyase 1 family. Argininosuccinate lyase subfamily.

The protein localises to the cytoplasm. The catalysed reaction is 2-(N(omega)-L-arginino)succinate = fumarate + L-arginine. Its pathway is amino-acid biosynthesis; L-arginine biosynthesis; L-arginine from L-ornithine and carbamoyl phosphate: step 3/3. This chain is Argininosuccinate lyase, found in Anaeromyxobacter sp. (strain K).